Reading from the N-terminus, the 37-residue chain is Large ribosomal subunit protein bL36 (37 aa).

This sequence belongs to the bacterial ribosomal protein bL36 family.

In Pelotomaculum thermopropionicum (strain DSM 13744 / JCM 10971 / SI), this protein is Large ribosomal subunit protein bL36.